Reading from the N-terminus, the 304-residue chain is Insulin-like growth factor-binding protein 2 (304 aa).

The N-terminal stretch at 1-34 (MLPRLGGPALPLLLPSLLLLLLLGAGGCGPGVRA) is a signal peptide. Residues 36 to 118 (VLFRCPPCTP…VTGAGTCEKR (83 aa)) enclose the IGFBP N-terminal domain. Disulfide bonds link Cys-40-Cys-68, Cys-43-Cys-70, Cys-51-Cys-71, Cys-59-Cys-74, Cys-82-Cys-95, Cys-89-Cys-115, Cys-206-Cys-240, Cys-251-Cys-262, and Cys-264-Cys-285. In terms of domain architecture, Thyroglobulin type-1 spans 203-285 (RTPCQQELDQ…APTIRGDPEC (83 aa)). The short motif at 280–282 (RGD) is the Cell attachment site element.

In terms of assembly, interacts with IGF1. Interacts with IGF2. Interacts (via RGD motif) with integrin alpha5/ITGA5; this interaction induces cell migration, adhesion or apoptosis according to the context. Interacts with PTPRB; this interaction leads to PTPRB dimerization and inactivation. Cleaved by MMP9 leading to release of free IGF2 from IGFBP2-IGF2 complex, which contributes to enhance the motility and the growth of astrocytes. In terms of processing, O-glycosylated. In adults, expressed in brain, testes, ovaries, and kidney. Expression in the adult liver is barely detectable.

The protein localises to the secreted. Functionally, multifunctional protein that plays a critical role in regulating the availability of IGFs such as IGF1 and IGF2 to their receptors and thereby regulates IGF-mediated cellular processes including proliferation, differentiation, and apoptosis in a cell-type specific manner. Functions coordinately with receptor protein tyrosine phosphatase beta/PTPRB and the IGF1 receptor to regulate IGF1-mediated signaling by stimulating the phosphorylation of PTEN leading to its inactivation and AKT1 activation. Plays a positive role in cell migration via interaction with integrin alpha5/ITGA5 through an RGD motif. Additionally, interaction with ITGA5/ITGB1 enhances the adhesion of endothelial progenitor cells to endothelial cells. Upon mitochondrial damage, facilitates apoptosis with ITGA5 of podocytes, and then activates the phosphorylation of focal adhesion kinase (FAK)-mediated mitochondrial injury. The sequence is that of Insulin-like growth factor-binding protein 2 (Igfbp2) from Rattus norvegicus (Rat).